Here is a 490-residue protein sequence, read N- to C-terminus: Betaine aldehyde dehydrogenase (490 aa).

Asparagine 93 serves as a coordination point for K(+). 150 to 152 (GAW) is a binding site for NAD(+). Lysine 162 functions as the Charge relay system in the catalytic mechanism. 176-179 (KPSE) is an NAD(+) binding site. Valine 180 serves as a coordination point for K(+). An NAD(+)-binding site is contributed by 230-233 (GTAT). Leucine 246 contributes to the K(+) binding site. Residue glutamate 252 is the Proton acceptor of the active site. 3 residues coordinate NAD(+): glycine 254, cysteine 286, and glutamate 387. Catalysis depends on cysteine 286, which acts as the Nucleophile. The residue at position 286 (cysteine 286) is a Cysteine sulfenic acid (-SOH). Residues lysine 457 and glycine 460 each coordinate K(+). The Charge relay system role is filled by glutamate 464.

Belongs to the aldehyde dehydrogenase family. In terms of assembly, dimer of dimers. K(+) is required as a cofactor.

It carries out the reaction betaine aldehyde + NAD(+) + H2O = glycine betaine + NADH + 2 H(+). It functions in the pathway amine and polyamine biosynthesis; betaine biosynthesis via choline pathway; betaine from betaine aldehyde: step 1/1. Its function is as follows. Involved in the biosynthesis of the osmoprotectant glycine betaine. Catalyzes the irreversible oxidation of betaine aldehyde to the corresponding acid. The polypeptide is Betaine aldehyde dehydrogenase (Xanthomonas campestris pv. campestris (strain ATCC 33913 / DSM 3586 / NCPPB 528 / LMG 568 / P 25)).